Consider the following 270-residue polypeptide: Putative ABC transporter ATP-binding protein MG304 homolog (270 aa).

Positions L2–T232 constitute an ABC transporter domain. G36–S43 is an ATP binding site.

Belongs to the ABC transporter superfamily.

The sequence is that of Putative ABC transporter ATP-binding protein MG304 homolog from Mycoplasma pneumoniae (strain ATCC 29342 / M129 / Subtype 1) (Mycoplasmoides pneumoniae).